Consider the following 210-residue polypeptide: Redox-sensing transcriptional repressor Rex (210 aa).

A DNA-binding region (H-T-H motif) is located at residues lysine 17–phenylalanine 56. Glycine 91 to glycine 96 is an NAD(+) binding site.

Belongs to the transcriptional regulatory Rex family. Homodimer.

It localises to the cytoplasm. In terms of biological role, modulates transcription in response to changes in cellular NADH/NAD(+) redox state. This chain is Redox-sensing transcriptional repressor Rex, found in Clostridium botulinum (strain Alaska E43 / Type E3).